Consider the following 160-residue polypeptide: Phosphopantetheine adenylyltransferase (160 aa).

Ser9 provides a ligand contact to substrate. ATP contacts are provided by residues 9-10 (SF) and His17. The substrate site is built by Lys41, Ile73, and Lys87. ATP-binding positions include 88 to 90 (GLR), Glu98, and 122 to 128 (YSFVSSS).

The protein belongs to the bacterial CoaD family. As to quaternary structure, homohexamer. The cofactor is Mg(2+).

The protein resides in the cytoplasm. The enzyme catalyses (R)-4'-phosphopantetheine + ATP + H(+) = 3'-dephospho-CoA + diphosphate. The protein operates within cofactor biosynthesis; coenzyme A biosynthesis; CoA from (R)-pantothenate: step 4/5. Reversibly transfers an adenylyl group from ATP to 4'-phosphopantetheine, yielding dephospho-CoA (dPCoA) and pyrophosphate. This is Phosphopantetheine adenylyltransferase from Mycolicibacterium vanbaalenii (strain DSM 7251 / JCM 13017 / BCRC 16820 / KCTC 9966 / NRRL B-24157 / PYR-1) (Mycobacterium vanbaalenii).